Consider the following 114-residue polypeptide: Large ribosomal subunit protein uL22 (114 aa).

It belongs to the universal ribosomal protein uL22 family. As to quaternary structure, part of the 50S ribosomal subunit.

Its function is as follows. This protein binds specifically to 23S rRNA; its binding is stimulated by other ribosomal proteins, e.g. L4, L17, and L20. It is important during the early stages of 50S assembly. It makes multiple contacts with different domains of the 23S rRNA in the assembled 50S subunit and ribosome. Functionally, the globular domain of the protein is located near the polypeptide exit tunnel on the outside of the subunit, while an extended beta-hairpin is found that lines the wall of the exit tunnel in the center of the 70S ribosome. In Lysinibacillus sphaericus (strain C3-41), this protein is Large ribosomal subunit protein uL22.